Consider the following 215-residue polypeptide: Probable phosphoglycerate mutase GpmB (215 aa).

Residues Arg-8–Asn-15, Gln-21–Gly-22, Arg-58, Lys-60, Glu-82–Met-85, Arg-104–Arg-105, and Gly-151–Ile-152 each bind substrate. The active-site Tele-phosphohistidine intermediate is His-9. Glu-82 acts as the Proton donor/acceptor in catalysis.

It belongs to the phosphoglycerate mutase family. GpmB subfamily.

The catalysed reaction is (2R)-2-phosphoglycerate = (2R)-3-phosphoglycerate. It functions in the pathway carbohydrate degradation; glycolysis; pyruvate from D-glyceraldehyde 3-phosphate: step 3/5. The protein is Probable phosphoglycerate mutase GpmB of Salmonella paratyphi A (strain AKU_12601).